A 180-amino-acid chain; its full sequence is Transmembrane protein 190 (180 aa).

The first 21 residues, 1-21 (MVGSGIPALGLLLLMQGSADG), serve as a signal peptide directing secretion. The Extracellular segment spans residues 22-81 (NGIQGFFYPWSCEGDVWDRESCGGQAAIENPNLCLRLRCCYRDGVCYHQRPDENMRRKHM). One can recognise a P-type domain in the interval 31–71 (WSCEGDVWDRESCGGQAAIENPNLCLRLRCCYRDGVCYHQR). Cystine bridges form between cysteine 33/cysteine 61, cysteine 43/cysteine 60, and cysteine 55/cysteine 67. Residues 82-102 (WALGWTCGGLLFLITSICLFW) form a helical membrane-spanning segment. Residues 103 to 180 (WARRHDMLRL…EETEGGDEDD (78 aa)) lie on the Cytoplasmic side of the membrane. Basic and acidic residues predominate over residues 131–140 (KDRTPSEKKT). Residues 131-180 (KDRTPSEKKTPSVGSIPPAAPTEGALDVSGGTEGEGTEGGEETEGGDEDD) form a disordered region. Residues 165 to 180 (EGTEGGEETEGGDEDD) are compositionally biased toward acidic residues.

It is found in the membrane. This Bos taurus (Bovine) protein is Transmembrane protein 190 (TMEM190).